A 431-amino-acid chain; its full sequence is UPF0597 protein TDE_2144 (431 aa).

This sequence belongs to the UPF0597 family.

This Treponema denticola (strain ATCC 35405 / DSM 14222 / CIP 103919 / JCM 8153 / KCTC 15104) protein is UPF0597 protein TDE_2144.